We begin with the raw amino-acid sequence, 155 residues long: Small ribosomal subunit protein uS7c (155 aa).

The protein belongs to the universal ribosomal protein uS7 family. As to quaternary structure, part of the 30S ribosomal subunit.

The protein localises to the plastid. The protein resides in the chloroplast. One of the primary rRNA binding proteins, it binds directly to 16S rRNA where it nucleates assembly of the head domain of the 30S subunit. The protein is Small ribosomal subunit protein uS7c (rps7) of Houttuynia cordata (Chameleon plant).